We begin with the raw amino-acid sequence, 121 residues long: Securin (121 aa).

Positions 1 to 24 (RATEKSVKTNGPLKQKQTTFSAKK) are disordered. 2 consecutive short sequence motifs (TEK-box) follow at residues 3–5 (TEK) and 26–28 (TEK). Residues 93-121 (LGPPSPLNMPSPPWESDVLQSPSSILSTL) are disordered. The short motif at 95 to 105 (PPSPLNMPSPP) is the SH3-binding element. Residues 95–105 (PPSPLNMPSPP) show a composition bias toward pro residues. Phosphoserine; by CDK1 is present on serine 97. Positions 110 to 121 (VLQSPSSILSTL) are enriched in polar residues.

Belongs to the securin family. As to quaternary structure, interacts with the caspase-like ESPL1, and prevents its protease activity probably by covering its active site. Interacts with p53/TP53 and blocks its activity probably by blocking its binding to DNA. Interacts with the Ku 70 kDa subunit of ds-DNA kinase. Interacts with PTTG1IP. Interacts with RPS10 and DNAJA1. Post-translationally, phosphorylated by CDK1 during mitosis. Phosphorylated in vitro by ds-DNA kinase. In terms of processing, ubiquitinated through 'Lys-11' linkage of ubiquitin moieties by the anaphase promoting complex (APC) at the onset of anaphase, conducting to its degradation. 'Lys-11'-linked ubiquitination is mediated by the E2 ligase UBE2C/UBCH10.

The protein localises to the cytoplasm. It localises to the nucleus. Functionally, regulatory protein, which plays a central role in chromosome stability, in the p53/TP53 pathway, and DNA repair. Probably acts by blocking the action of key proteins. During the mitosis, it blocks Separase/ESPL1 function, preventing the proteolysis of the cohesin complex and the subsequent segregation of the chromosomes. At the onset of anaphase, it is ubiquitinated, conducting to its destruction and to the liberation of ESPL1. Its function is however not limited to a blocking activity, since it is required to activate ESPL1. Negatively regulates the transcriptional activity and related apoptosis activity of p53/TP53. The negative regulation of p53/TP53 may explain the strong transforming capability of the protein when it is overexpressed. May also play a role in DNA repair via its interaction with Ku, possibly by connecting DNA damage-response pathways with sister chromatid separation. The protein is Securin (PTTG1) of Sus scrofa (Pig).